The chain runs to 123 residues: Putative membrane protein insertion efficiency factor (123 aa).

A disordered region spans residues 1–23; the sequence is MGSCGGKHTGKGAPKPYSRNFTD.

The protein belongs to the UPF0161 family.

The protein resides in the cell inner membrane. Could be involved in insertion of integral membrane proteins into the membrane. In Brucella ovis (strain ATCC 25840 / 63/290 / NCTC 10512), this protein is Putative membrane protein insertion efficiency factor.